The sequence spans 81 residues: Toxin MIT1 (81 aa).

Intrachain disulfides connect Cys-7–Cys-19, Cys-13–Cys-31, Cys-18–Cys-59, Cys-41–Cys-67, and Cys-61–Cys-77.

Belongs to the AVIT (prokineticin) family. In terms of tissue distribution, expressed by the venom gland.

The protein localises to the secreted. Potent agonist for both PKR1/PROKR1 and PKR2/PROKR2. Potently contracts gastrointestinal (GI) smooth muscle. In Dendroaspis polylepis polylepis (Black mamba), this protein is Toxin MIT1.